Reading from the N-terminus, the 205-residue chain is MMAPFASLASGILLLLSLIASSKACSCAPPHPQTAFCNSDLVIRAKFMGSPEINETTLYQRYKIKMTKMLKGFKAVGNAADIRYAYTPVMESLCGYAHKSQNRSEEFLITGRLRNGNLHISACSFLVPWRTLSPAQQRAFSKTYSAGCGVCTVFPCLSIPCKLESDTHCLWTDQVLVGSEDYQSRHFACLPRNPGLCTWRSLGAR.

The first 24 residues, 1-24 (MMAPFASLASGILLLLSLIASSKA), serve as a signal peptide directing secretion. Residue Cys-25 participates in Zn(2+) binding. Residues 25-28 (CSCA) are involved in metalloproteinase-binding. Intrachain disulfides connect Cys-25–Cys-94, Cys-27–Cys-123, Cys-37–Cys-148, Cys-151–Cys-197, Cys-156–Cys-161, and Cys-169–Cys-189. In terms of domain architecture, NTR spans 25–148 (CSCAPPHPQT…AFSKTYSAGC (124 aa)). Asn-54 carries an N-linked (GlcNAc...) asparagine glycan. The segment at 91–92 (ES) is involved in metalloproteinase-binding. An N-linked (GlcNAc...) asparagine glycan is attached at Asn-102. Ser-179 carries the post-translational modification Phosphoserine.

Belongs to the protease inhibitor I35 (TIMP) family. Interacts with MMP1, MMP3, MMP10 and MMP13, but has only very low affinity for MMP14. Interacts with CD63; identified in a complex with CD63 and ITGB1. In terms of processing, the activity of TIMP1 is dependent on the presence of disulfide bonds. N-glycosylated. Found in fetal and adult tissues. Highest levels are found in bone. Also found in lung, ovary and uterus.

It localises to the secreted. Metalloproteinase inhibitor that functions by forming one to one complexes with target metalloproteinases, such as collagenases, and irreversibly inactivates them by binding to their catalytic zinc cofactor. Acts on MMP1, MMP2, MMP3, MMP7, MMP8, MMP9, MMP10, MMP11, MMP12, MMP13 and MMP16. Does not act on MMP14. Also functions as a growth factor that regulates cell differentiation, migration and cell death and activates cellular signaling cascades via CD63 and ITGB1. Plays a role in integrin signaling. This is Metalloproteinase inhibitor 1 (Timp1) from Mus musculus (Mouse).